We begin with the raw amino-acid sequence, 430 residues long: NEDD8-activating enzyme E1 catalytic subunit (430 aa).

52–76 is a binding site for ATP; that stretch reads GLGCELLKNLALSGFRTIEVIDMDT. The active-site Glycyl thioester intermediate is cysteine 211.

It belongs to the ubiquitin-activating E1 family. UBA3 subfamily. Heterodimer of uba-3 and ula-1. Interacts with NEDD8 and ubc-12. Expressed in intestine, vulva epithelium and head and tail neurons.

The protein localises to the nucleus. The protein resides in the cytoplasm. It catalyses the reaction ATP + [NEDD8 protein] + [E1 NEDD8-activating enzyme]-L-cysteine = AMP + diphosphate + [E1 NEDD8-activating enzyme]-S-[NEDD8 protein]-yl-L-cysteine.. It functions in the pathway protein modification; protein neddylation. In terms of biological role, catalytic subunit of the dimeric rfl-1 (uba-3)-ula-1 E1 enzyme. E1 activates NEDD8 by first adenylating its C-terminal glycine residue with ATP, thereafter linking this residue to the side chain of the catalytic cysteine, yielding a NEDD8-uba-3 thioester and free AMP. E1 finally transfers NEDD8 to the catalytic cysteine of ubc-12. Required for cytokinesis and mitotic spindle orientation during early embryogenesis. The polypeptide is NEDD8-activating enzyme E1 catalytic subunit (Caenorhabditis elegans).